The chain runs to 560 residues: MLGLLGATTLMLVAGAPWVLPAGGADLRSPENVVVSIIDDNFILKWKSSSESVSNVTFSADYQITGMDNWIKLPGCQYVTSTECNFSSIKLKSVYEKTKLRIRAETGNSTSPWYEVEPFIPFQEAQIGPPDVHLEAEDKAIIINLSPPGTKNSVMWAMDSSSFVYSLVIWKNSSSLEERTKTVYARDKIHQLSPETTYCLKVKAGLRSPRKVGVYSPVYCINTTVKHHLPSPENLEINAENRVYVLKWNYTYENVTFQAQWLHAFLKKIPEDHSDKWKQIPNCENVKTTHCVFPQNVFTKGIFFIRVQASNGNSTSLWSEEKRFNTEMQTILFPPVINMKPINDASLRVGIGAPKESEDKSVNQLYPLIYEVIFRENTSDTERDVLEKRTDFTFSNLKPLTVYCVKARALIENDRWNRSSVFSDTVCEKTKPGSTSQAWLIAGILSAILLFPAVFYGVKVVSRCINYVFFPSSKPPSTIDEYFAEQPLKNLLLSTSEEQTEICFIVENTNTITTIEETDQIDDNHSRCSSQTNRDSGVYSNEDENSGSKIGEEILRQAAV.

The first 24 residues, Met1 to Gly24, serve as a signal peptide directing secretion. The Extracellular portion of the chain corresponds to Ala25–Gln437. Fibronectin type-III domains lie at Ser29 to Ala125, His133 to Thr224, Ser231 to Gln329, and Phe333 to Gly433. Asn55 is a glycosylation site (N-linked (GlcNAc...) asparagine). Cys76 and Cys84 are joined by a disulfide. N-linked (GlcNAc...) asparagine glycans are attached at residues Asn85, Asn108, and Asn172. Cys199 and Cys220 are disulfide-bonded. 3 N-linked (GlcNAc...) asparagine glycosylation sites follow: Asn222, Asn249, and Asn254. Residues Cys283 and Cys291 are joined by a disulfide bond. Residues Asn313, Asn377, and Asn417 are each glycosylated (N-linked (GlcNAc...) asparagine). Cysteines 404 and 427 form a disulfide. The chain crosses the membrane as a helical span at residues Ala438–Val458. The Cytoplasmic portion of the chain corresponds to Lys459–Val560. The S-palmitoyl cysteine moiety is linked to residue Cys464. Tyr467 and Tyr482 each carry phosphotyrosine; by TYK2. The interval Leu492–Glu501 is important for interaction with TYK2. 2 positions are modified to phosphoserine: Ser496 and Ser536. The disordered stretch occupies residues Gln520–Val560. Residues Arg527–Tyr539 are compositionally biased toward polar residues. Over residues Ile550–Val560 the composition is skewed to basic and acidic residues.

The protein belongs to the type II cytokine receptor family. In terms of assembly, heterodimer with IFNAR2; forming the receptor for type I interferon. Interacts with TYK2. Interacts with STAT1 and STAT2; the interaction requires its phosphorylation at Tyr-482. Interacts (serine-phosphorylated form) with FBXW11, the substrate recognition component of a SCF (SKP1-CUL1-F-box protein) E3 ubiquitin-protein ligase complex. Interacts with SHMT2; this promotes interaction with ABRAXAS2 and the BRISC complex. Interacts with TRIM10; this interaction prevents association between IFNAR1 and TYK2. Ubiquitinated, leading to its internalization and degradation. Polyubiquitinated via 'Lys-48'-linked and 'Lys-63'-linked ubiquitin chains, leading to receptor internalization and lysosomal degradation. The 'Lys-63'-linked ubiquitin chains are cleaved off by the BRISC complex. In terms of processing, phosphorylated on tyrosine residues in response to interferon-binding: phosphorylation by TYK2 tyrosine kinase creates docking sites for STAT proteins. Phosphorylated on serine residues in response to interferon binding; this promotes interaction with FBXW11 and ubiquitination. Post-translationally, palmitoylation at Cys-464 is required for the activation of STAT1 and STAT2.

The protein resides in the cell membrane. It localises to the late endosome. The protein localises to the lysosome. Together with IFNAR2, forms the heterodimeric receptor for type I interferons (including interferons alpha, beta, epsilon, omega and kappa). Type I interferon binding activates the JAK-STAT signaling cascade, resulting in transcriptional activation or repression of interferon-regulated genes that encode the effectors of the interferon response. Mechanistically, type I interferon-binding brings the IFNAR1 and IFNAR2 subunits into close proximity with one another, driving their associated Janus kinases (JAKs) (TYK2 bound to IFNAR1 and JAK1 bound to IFNAR2) to cross-phosphorylate one another. The activated kinases phosphorylate specific tyrosine residues on the intracellular domains of IFNAR1 and IFNAR2, forming docking sites for the STAT transcription factors. STAT proteins are then phosphorylated by the JAKs, promoting their translocation into the nucleus to regulate expression of interferon-regulated genes. Can also act independently of IFNAR2: form an active IFNB1 receptor by itself and activate a signaling cascade that does not involve activation of the JAK-STAT pathway. The chain is Interferon alpha/beta receptor 1 (IFNAR1) from Sus scrofa (Pig).